We begin with the raw amino-acid sequence, 420 residues long: Tyrosine--tRNA ligase (420 aa).

Tyrosine 36 lines the L-tyrosine pocket. The short motif at 41–50 (PTADSLHIGH) is the 'HIGH' region element. 2 residues coordinate L-tyrosine: tyrosine 170 and glutamine 174. Residues 231–235 (KFGKT) carry the 'KMSKS' region motif. Lysine 234 provides a ligand contact to ATP. Positions 353-420 (RNIVEVIVET…KKKYFMVNYK (68 aa)) constitute an S4 RNA-binding domain.

Belongs to the class-I aminoacyl-tRNA synthetase family. TyrS type 1 subfamily. Homodimer.

The protein resides in the cytoplasm. The enzyme catalyses tRNA(Tyr) + L-tyrosine + ATP = L-tyrosyl-tRNA(Tyr) + AMP + diphosphate + H(+). Functionally, catalyzes the attachment of tyrosine to tRNA(Tyr) in a two-step reaction: tyrosine is first activated by ATP to form Tyr-AMP and then transferred to the acceptor end of tRNA(Tyr). This is Tyrosine--tRNA ligase from Staphylococcus saprophyticus subsp. saprophyticus (strain ATCC 15305 / DSM 20229 / NCIMB 8711 / NCTC 7292 / S-41).